Here is a 279-residue protein sequence, read N- to C-terminus: Tryptophan 2,3-dioxygenase (279 aa).

Substrate-binding positions include 48-52, Tyr-110, and Arg-114; that span reads FIVIH. Residue His-237 participates in heme binding. Thr-251 is a substrate binding site.

Belongs to the tryptophan 2,3-dioxygenase family. Homotetramer. The cofactor is heme.

It carries out the reaction L-tryptophan + O2 = N-formyl-L-kynurenine. The protein operates within amino-acid degradation; L-tryptophan degradation via kynurenine pathway; L-kynurenine from L-tryptophan: step 1/2. In terms of biological role, heme-dependent dioxygenase that catalyzes the oxidative cleavage of the L-tryptophan (L-Trp) pyrrole ring and converts L-tryptophan to N-formyl-L-kynurenine. Catalyzes the oxidative cleavage of the indole moiety. This Exiguobacterium sibiricum (strain DSM 17290 / CCUG 55495 / CIP 109462 / JCM 13490 / 255-15) protein is Tryptophan 2,3-dioxygenase.